Consider the following 84-residue polypeptide: Small ribosomal subunit protein bS20 (84 aa).

Belongs to the bacterial ribosomal protein bS20 family.

Its function is as follows. Binds directly to 16S ribosomal RNA. This is Small ribosomal subunit protein bS20 from Phocaeicola vulgatus (strain ATCC 8482 / DSM 1447 / JCM 5826 / CCUG 4940 / NBRC 14291 / NCTC 11154) (Bacteroides vulgatus).